A 1127-amino-acid polypeptide reads, in one-letter code: Major DNA-binding protein (1127 aa).

The segment at 1098–1127 is required for nuclear localization; sequence QVKLTSMDHSGKVVGGKKRKIATMFDDLDL.

The protein belongs to the herpesviridae major DNA-binding protein family. As to quaternary structure, homooligomers. Forms double-helical filaments necessary for the formation of replication compartments within the host nucleus. Interacts with the origin-binding protein. Interacts with the helicase primase complex; this interaction stimulates primer synthesis activity of the helicase-primase complex. Interacts with the DNA polymerase. Interacts with the alkaline exonuclease; this interaction increases its nuclease processivity.

It is found in the host nucleus. Functionally, plays several crucial roles in viral infection. Participates in the opening of the viral DNA origin to initiate replication by interacting with the origin-binding protein. May disrupt loops, hairpins and other secondary structures present on ssDNA to reduce and eliminate pausing of viral DNA polymerase at specific sites during elongation. Promotes viral DNA recombination by performing strand-transfer, characterized by the ability to transfer a DNA strand from a linear duplex to a complementary single-stranded DNA circle. Can also catalyze the renaturation of complementary single strands. Additionally, reorganizes the host cell nucleus, leading to the formation of prereplicative sites and replication compartments. This process is driven by the protein which can form double-helical filaments in the absence of DNA. In Alcelaphine herpesvirus 1 (strain C500) (AlHV-1), this protein is Major DNA-binding protein.